A 357-amino-acid polypeptide reads, in one-letter code: Enoyl-[acyl-carrier-protein] reductase, mitochondrial (357 aa).

Residues 1 to 19 (MLRRGFLSRINAAQWSRQM) constitute a mitochondrion transit peptide. The 317-residue stretch at 36–352 (EVLQLVEDKL…FKGFTGKKYI (317 aa)) folds into the Enoyl reductase (ER) domain. Y74 acts as the Proton donor in catalysis. NADP(+) is bound by residues N147, 173–176 (NSAV), 196–198 (RDR), 264–267 (YGGM), 289–291 (FWM), K349, and K350.

Belongs to the zinc-containing alcohol dehydrogenase family. Quinone oxidoreductase subfamily. As to quaternary structure, homodimer. Expressed in the central nervous system.

It localises to the mitochondrion. The enzyme catalyses a 2,3-saturated acyl-[ACP] + NADP(+) = a (2E)-enoyl-[ACP] + NADPH + H(+). Its function is as follows. Catalyzes the NADPH-dependent reduction of trans-2-enoyl thioesters in mitochondrial fatty acid synthesis (fatty acid synthesis type II). Fatty acid chain elongation in mitochondria uses acyl carrier protein (ACP) as an acyl group carrier, but the enzyme accepts both ACP and CoA thioesters as substrates in vitro. Involved in iron homeostasis; affecting Fe-S cluster assembly and ceramide metabolism. Required for proper morphology and bioenergetic functions of mitochondria. Required for maintenance of neurons, including photoreceptor neurons. This Drosophila melanogaster (Fruit fly) protein is Enoyl-[acyl-carrier-protein] reductase, mitochondrial.